We begin with the raw amino-acid sequence, 1395 residues long: G2/mitotic-specific cyclin-B3 (1395 aa).

A disordered region spans residues 1 to 59 (MLLPLPPQSSKPVPKKSQSSKIVPSHHDPSEKTGENCQTKISPSSLQESPSSLQGALKK). Residues 10 to 23 (SKPVPKKSQSSKIV) are compositionally biased toward low complexity. Residues 25-34 (SHHDPSEKTG) are compositionally biased toward basic and acidic residues. The segment covering 42–54 (SPSSLQESPSSLQ) has biased composition (low complexity). The short motif at 60–68 (RSAFEDLTN) is the D-box element. Disordered regions lie at residues 418 to 464 (LSIK…PTEE) and 1074 to 1122 (ATMT…DSSD). The span at 419–431 (SIKEKPSTEKESF) shows a compositional bias: basic and acidic residues. Low complexity predominate over residues 1082–1093 (SRTTTESSACES).

This sequence belongs to the cyclin family. Cyclin AB subfamily. Interacts with CDK2 kinase. Ubiquitinated. Ubiquitination leads to its degradation during anaphase entry, after degradation of CCNB1. In terms of tissue distribution, testis specific. In testis, it is expressed in developing germ cells, but not in Leydig cells. Weakly or not expressed in other tissues.

It localises to the nucleus. Its function is as follows. Cyclins are positive regulatory subunits of the cyclin-dependent kinases (CDKs), and thereby play an essential role in the control of the cell cycle, notably via their destruction during cell division. Its tissue specificity suggest that it may be required during early meiotic prophase I. The sequence is that of G2/mitotic-specific cyclin-B3 (CCNB3) from Homo sapiens (Human).